The primary structure comprises 940 residues: DNA gyrase subunit A (940 aa).

The disordered stretch occupies residues 1–22; the sequence is MSDHTNPPSAPPDDDPNGGSLL. The Topo IIA-type catalytic domain maps to 48–538; sequence LPDARDGLKP…SLADQDDESL (491 aa). The active-site O-(5'-phospho-DNA)-tyrosine intermediate is the Tyr136. The GyrA-box motif lies at 565 to 571; it reads QHRGGRG. Residues 914–924 show a composition bias toward acidic residues; it reads ESVDDNGDDAD. Residues 914–940 form a disordered region; it reads ESVDDNGDDADSVAPAAPDGQVTDSDD.

The protein belongs to the type II topoisomerase GyrA/ParC subunit family. Heterotetramer, composed of two GyrA and two GyrB chains. In the heterotetramer, GyrA contains the active site tyrosine that forms a transient covalent intermediate with DNA, while GyrB binds cofactors and catalyzes ATP hydrolysis.

The protein localises to the cytoplasm. It carries out the reaction ATP-dependent breakage, passage and rejoining of double-stranded DNA.. In terms of biological role, a type II topoisomerase that negatively supercoils closed circular double-stranded (ds) DNA in an ATP-dependent manner to modulate DNA topology and maintain chromosomes in an underwound state. Negative supercoiling favors strand separation, and DNA replication, transcription, recombination and repair, all of which involve strand separation. Also able to catalyze the interconversion of other topological isomers of dsDNA rings, including catenanes and knotted rings. Type II topoisomerases break and join 2 DNA strands simultaneously in an ATP-dependent manner. This chain is DNA gyrase subunit A, found in Granulibacter bethesdensis (strain ATCC BAA-1260 / CGDNIH1).